The primary structure comprises 53 residues: ComX pheromone (53 aa).

A propeptide spanning residues 1–46 (MQEMVGYLIKYPNVLREVMEGNACLLGVDKDQSECIINGFKGLEIY) is cleaved from the precursor. Trp-51 carries 3'-geranyl-2',N2-cyclotryptophan lipidation.

Interacts directly with the sensor histidine kinase ComP and stimulates its activity. Trp-51 is modified by geranylation, which is essential for activity. Modified by the tryptophan prenyltransferase ComQ before export to the extracellular environment. The type of isoprenyl derivative differs among the different pherotypes and depends on ComX primary sequence.

Its subcellular location is the secreted. In terms of biological role, part of a major quorum-sensing system that regulates the development of genetic competence. Acts through the activation of the two-component regulatory system ComP/ComA composed of a sensor histidine kinase, ComP, and a response regulator, ComA. The protein is ComX pheromone of Bacillus mojavensis.